The sequence spans 74 residues: MDLSVKSQENVEHMVEAIKEKLRMVNAGAMKAANFDEDMYEDLRDIYDHVMKRETFSISEMQAITEELGTLMKK.

The protein belongs to the UPF0435 family.

This chain is UPF0435 protein Bcer98_0391, found in Bacillus cytotoxicus (strain DSM 22905 / CIP 110041 / 391-98 / NVH 391-98).